The following is a 122-amino-acid chain: Acidic phospholipase A2 A' (122 aa).

Intrachain disulfides connect Cys-26-Cys-115, Cys-28-Cys-44, Cys-43-Cys-95, Cys-49-Cys-122, Cys-50-Cys-88, Cys-57-Cys-81, and Cys-75-Cys-86. Tyr-27, Gly-29, and Gly-31 together coordinate Ca(2+). Residue His-47 is part of the active site. Residue Asp-48 participates in Ca(2+) binding. Asp-89 is an active-site residue.

Belongs to the phospholipase A2 family. Group II subfamily. D49 sub-subfamily. Ca(2+) serves as cofactor. Expressed by the venom gland.

Its subcellular location is the secreted. The enzyme catalyses a 1,2-diacyl-sn-glycero-3-phosphocholine + H2O = a 1-acyl-sn-glycero-3-phosphocholine + a fatty acid + H(+). Its function is as follows. PLA2 catalyzes the calcium-dependent hydrolysis of the 2-acyl groups in 3-sn-phosphoglycerides. This chain is Acidic phospholipase A2 A', found in Gloydius halys (Chinese water mocassin).